We begin with the raw amino-acid sequence, 370 residues long: 4-hydroxy-3-methylbut-2-en-1-yl diphosphate synthase (flavodoxin) (370 aa).

Residues Cys-268, Cys-271, Cys-303, and Glu-310 each contribute to the [4Fe-4S] cluster site.

The protein belongs to the IspG family. The cofactor is [4Fe-4S] cluster.

The catalysed reaction is (2E)-4-hydroxy-3-methylbut-2-enyl diphosphate + oxidized [flavodoxin] + H2O + 2 H(+) = 2-C-methyl-D-erythritol 2,4-cyclic diphosphate + reduced [flavodoxin]. It functions in the pathway isoprenoid biosynthesis; isopentenyl diphosphate biosynthesis via DXP pathway; isopentenyl diphosphate from 1-deoxy-D-xylulose 5-phosphate: step 5/6. Functionally, converts 2C-methyl-D-erythritol 2,4-cyclodiphosphate (ME-2,4cPP) into 1-hydroxy-2-methyl-2-(E)-butenyl 4-diphosphate. In Bacillus pumilus (strain SAFR-032), this protein is 4-hydroxy-3-methylbut-2-en-1-yl diphosphate synthase (flavodoxin).